Here is a 663-residue protein sequence, read N- to C-terminus: RING finger protein 145 (663 aa).

14 consecutive transmembrane segments (helical) span residues 53–73, 77–97, 123–143, 146–166, 168–188, 205–222, 225–245, 275–295, 316–336, 340–360, 384–404, 410–430, 460–480, and 482–502; these read YLAL…LTLP, LVQL…HQIS, FTTA…VMKT, IWLF…VPLE, IVII…YFLG, LVQV…MSLW, LVVP…QIYS, YSLL…LTLC, TEGV…LQVV, FLLS…MLEI, SLCL…CQFF, LLII…TLFI, LLEF…TIFG, and WTVM…WLRA. Positions 81-84 match the YLYF motif motif; sequence YLYF. Cys537 is a catalytic residue. The RING-type; atypical zinc finger occupies 537–575; the sequence is CAICYQDMKSAVITPCSHFFHAGCLKKWLYVQDTCPLCH. A disordered region spans residues 587 to 663; sequence LGTEAAPQPP…EGEVCPVESA (77 aa). The span at 619 to 628 shows a compositional bias: polar residues; the sequence is GTGTQEGSGD.

As to quaternary structure, interacts (via YLYF motif) with INSIG1 and INSIG2.

Its subcellular location is the endoplasmic reticulum membrane. It catalyses the reaction S-ubiquitinyl-[E2 ubiquitin-conjugating enzyme]-L-cysteine + [acceptor protein]-L-lysine = [E2 ubiquitin-conjugating enzyme]-L-cysteine + N(6)-ubiquitinyl-[acceptor protein]-L-lysine.. Functionally, E3 ubiquitin ligase that catalyzes the direct transfer of ubiquitin from E2 ubiquitin-conjugating enzyme to a specific substrate. In response to bacterial infection, negatively regulates the phagocyte oxidative burst by controlling the turnover of the NADPH oxidase complex subunits. Promotes monoubiquitination of CYBA and 'Lys-48'-linked polyubiquitination and degradation of CYBB NADPH oxidase catalytic subunits, both essential for the generation of antimicrobial reactive oxygen species. Involved in the maintenance of cholesterol homeostasis. In response to high sterol concentrations ubiquitinates HMGCR, a rate-limiting enzyme in cholesterol biosynthesis, and targets it for degradation. The interaction with INSIG1 is required for this function. In addition, triggers ubiquitination of SCAP, likely inhibiting its transport to the Golgi apparatus and the subsequent processing/maturation of SREBPF2, ultimately down-regulating cholesterol biosynthesis. This Mus musculus (Mouse) protein is RING finger protein 145.